The chain runs to 145 residues: Hydrophobin-like protein 1 (145 aa).

The first 20 residues, 1–20, serve as a signal peptide directing secretion; the sequence is MYLLQISISLLLLISTAATA. Asparagine 36 is a glycosylation site (N-linked (GlcNAc...) asparagine). 4 disulfides stabilise this stretch: cysteine 61–cysteine 121, cysteine 71–cysteine 113, cysteine 72–cysteine 104, and cysteine 122–cysteine 139.

Its subcellular location is the secreted. It localises to the cell wall. Functionally, aerial growth, conidiation, and dispersal of filamentous fungi in the environment rely upon a capability of their secreting small amphipathic proteins called hydrophobins (HPBs) with low sequence identity. Class I can self-assemble into an outermost layer of rodlet bundles on aerial cell surfaces, conferring cellular hydrophobicity that supports fungal growth, development and dispersal; whereas Class II form highly ordered films at water-air interfaces through intermolecular interactions but contribute nothing to the rodlet structure. In Botryotinia fuckeliana, hydrophobins are not involved in conferring surface hydrophobicity to conidia and aerial hyphae and their function in sclerotia and fruiting bodies remains to be investigated. This chain is Hydrophobin-like protein 1, found in Botryotinia fuckeliana (strain B05.10) (Noble rot fungus).